The following is a 342-amino-acid chain: Glucokinase (342 aa).

18–23 (GDIGGT) lines the ATP pocket.

This sequence belongs to the bacterial glucokinase family.

It localises to the cytoplasm. It carries out the reaction D-glucose + ATP = D-glucose 6-phosphate + ADP + H(+). The chain is Glucokinase from Chelativorans sp. (strain BNC1).